The chain runs to 194 residues: Adenylate kinase (194 aa).

Residue 11 to 16 (GSGKGT) coordinates ATP. Residues 31 to 60 (STGELLRAEIKAQTELGQAAAGYINEGHLV) form an NMP region. AMP contacts are provided by residues Thr-32, Arg-37, 58-60 (HLV), 86-89 (GFPR), and Gln-93. Residues 127 to 137 (NRGKVSGRSDD) form an LID region. Arg-128 contacts ATP. AMP is bound by residues Arg-134 and Arg-145. Gly-173 is an ATP binding site.

It belongs to the adenylate kinase family. In terms of assembly, monomer.

It localises to the cytoplasm. The catalysed reaction is AMP + ATP = 2 ADP. Its pathway is purine metabolism; AMP biosynthesis via salvage pathway; AMP from ADP: step 1/1. In terms of biological role, catalyzes the reversible transfer of the terminal phosphate group between ATP and AMP. Plays an important role in cellular energy homeostasis and in adenine nucleotide metabolism. In Porphyromonas gingivalis (strain ATCC BAA-308 / W83), this protein is Adenylate kinase.